A 278-amino-acid polypeptide reads, in one-letter code: Probable endonuclease 4 (278 aa).

Zn(2+) is bound by residues histidine 69, histidine 109, glutamate 145, aspartate 179, histidine 182, histidine 214, aspartate 227, histidine 229, and glutamate 259.

Belongs to the AP endonuclease 2 family. Requires Zn(2+) as cofactor.

The catalysed reaction is Endonucleolytic cleavage to 5'-phosphooligonucleotide end-products.. In terms of biological role, endonuclease IV plays a role in DNA repair. It cleaves phosphodiester bonds at apurinic or apyrimidinic (AP) sites, generating a 3'-hydroxyl group and a 5'-terminal sugar phosphate. In Phocaeicola vulgatus (strain ATCC 8482 / DSM 1447 / JCM 5826 / CCUG 4940 / NBRC 14291 / NCTC 11154) (Bacteroides vulgatus), this protein is Probable endonuclease 4.